A 416-amino-acid chain; its full sequence is Serine hydroxymethyltransferase (416 aa).

(6S)-5,6,7,8-tetrahydrofolate-binding positions include L121 and 125-127 (GHL). At K229 the chain carries N6-(pyridoxal phosphate)lysine.

It belongs to the SHMT family. In terms of assembly, homodimer. Pyridoxal 5'-phosphate is required as a cofactor.

The protein resides in the cytoplasm. The enzyme catalyses (6R)-5,10-methylene-5,6,7,8-tetrahydrofolate + glycine + H2O = (6S)-5,6,7,8-tetrahydrofolate + L-serine. The protein operates within one-carbon metabolism; tetrahydrofolate interconversion. It participates in amino-acid biosynthesis; glycine biosynthesis; glycine from L-serine: step 1/1. Its function is as follows. Catalyzes the reversible interconversion of serine and glycine with tetrahydrofolate (THF) serving as the one-carbon carrier. This reaction serves as the major source of one-carbon groups required for the biosynthesis of purines, thymidylate, methionine, and other important biomolecules. Also exhibits THF-independent aldolase activity toward beta-hydroxyamino acids, producing glycine and aldehydes, via a retro-aldol mechanism. The chain is Serine hydroxymethyltransferase from Bordetella avium (strain 197N).